The chain runs to 310 residues: Vomeronasal type-1 receptor 47 (310 aa).

Topologically, residues 1–16 are extracellular; the sequence is MNENSRLHTHSNIRNT. Residues 17 to 37 form a helical membrane-spanning segment; it reads FFSEIGIGISGNSFLLLFHII. The Cytoplasmic segment spans residues 38-49; sequence KFFRGHRPRLTD. Residues 50–70 traverse the membrane as a helical segment; sequence LPIGLLSLIHLLMLLVAAVIA. The Extracellular segment spans residues 71 to 91; it reads TDIFISWRGWNDIICKFLVYL. C85 and C172 are oxidised to a cystine. A helical transmembrane segment spans residues 92–114; that stretch reads YRSLRGLSLCTTSMLSVLQAIIL. The Cytoplasmic portion of the chain corresponds to 115-131; sequence SPRSYCLAKFKRKSSHN. The chain crosses the membrane as a helical span at residues 132-152; sequence ISCAIIFLSVLYMSISSHLFI. The Extracellular portion of the chain corresponds to 153-193; that stretch reads SITATLNLTMNNFLYVSQSCSLLPLSYLMQSMYSTLLVLRE. The N-linked (GlcNAc...) asparagine glycan is linked to N159. The chain crosses the membrane as a helical span at residues 194 to 214; sequence VFLIGLMVLSTSYMVALLCMH. Over 215–238 the chain is Cytoplasmic; the sequence is RKQAQNLQGTSLSLKTAPEQRATQ. A helical membrane pass occupies residues 239–259; the sequence is TILMLMTFFVLMSIFDSIVSS. Residues 260-269 are Extracellular-facing; the sequence is SRAMFLDDST. A helical membrane pass occupies residues 270-290; the sequence is CYSIYIFVMHIYATVSPFVFM. Residues 291 to 310 are Cytoplasmic-facing; that stretch reads STEKHLVNFFRSMCEWIINM.

It belongs to the G-protein coupled receptor 1 family.

It localises to the cell membrane. Functionally, putative pheromone receptor implicated in the regulation of social and reproductive behavior. In Mus musculus (Mouse), this protein is Vomeronasal type-1 receptor 47 (Vmn1r47).